Here is a 432-residue protein sequence, read N- to C-terminus: Serine/threonine-protein kinase CDG1 (432 aa).

Residues C4 and C6 are each lipidated (S-palmitoyl cysteine). Positions 15-24 are enriched in basic residues; sequence LKDKSHKRSI. Positions 15–47 are disordered; the sequence is LKDKSHKRSIRNQTSSSSAQPAGTAKEVDSSSS. Positions 25–35 are enriched in polar residues; sequence RNQTSSSSAQP. Phosphoserine occurs at positions 44 and 47. Positions 74 to 354 constitute a Protein kinase domain; sequence FRNESLIGRG…SQVVECLKYI (281 aa). ATP-binding positions include 80–88 and K102; that span reads IGRGGFGTV. Y147 bears the Phosphotyrosine mark. D200 acts as the Proton acceptor in catalysis. 2 positions are modified to phosphoserine: S204 and S234. 2 positions are modified to phosphothreonine: T235 and T240. Phosphotyrosine is present on Y248.

Belongs to the protein kinase superfamily. Ser/Thr protein kinase family. Interacts with BSU1, BSL1 and BRI1. Phosphorylated at Ser-44, Ser-47 and Ser-234 by BRI1. As to expression, expressed at high levels in the stamen and pollen grains. Expressed at a very low level in vegetative tissues.

It localises to the cell membrane. The catalysed reaction is L-seryl-[protein] + ATP = O-phospho-L-seryl-[protein] + ADP + H(+). It carries out the reaction L-threonyl-[protein] + ATP = O-phospho-L-threonyl-[protein] + ADP + H(+). With respect to regulation, activated by phosphorylation at Ser-234. Its function is as follows. Serine/threonine-protein kinase involved in the positive regulation of brassinosteroid (BR) signaling and plant growth. Mediates BR signal transduction from BRI1 receptor kinase to BSU1 phosphatase. After activation by phosphorylation at Ser-234 by BRI1, CDG1 phosphorylates BSU1 at 'Ser-764' in the phosphatase domain, increasing the ability of BSU1 to inactivate the negative regulator of BR signaling ASK7/BIN2 by dephosphorylation at 'Tyr-200'. The full kinase activity of CDG1 is required for its biological function. In Arabidopsis thaliana (Mouse-ear cress), this protein is Serine/threonine-protein kinase CDG1.